We begin with the raw amino-acid sequence, 618 residues long: UvrABC system protein C (618 aa).

Positions 13 to 92 constitute a GIY-YIG domain; the sequence is DKPGVYLMKN…IKKYRPKYNI (80 aa). The region spanning 204 to 239 is the UVR domain; the sequence is LDIVENFKLNMEKAAENLEFEKAAMLRDKINIIEKI.

Belongs to the UvrC family. Interacts with UvrB in an incision complex.

Its subcellular location is the cytoplasm. The UvrABC repair system catalyzes the recognition and processing of DNA lesions. UvrC both incises the 5' and 3' sides of the lesion. The N-terminal half is responsible for the 3' incision and the C-terminal half is responsible for the 5' incision. The sequence is that of UvrABC system protein C from Clostridium botulinum (strain ATCC 19397 / Type A).